A 643-amino-acid chain; its full sequence is Thioredoxin reductase 3 (643 aa).

Residues 1–53 are disordered; it reads MERSPPQSPGPGKAGDAPNRRSGHVRGARVLSPPGRRARLSSPGPSRSSEARE. Arg-26 carries the post-translational modification Asymmetric dimethylarginine; alternate. Arg-26 carries the omega-N-methylarginine; alternate modification. Phosphoserine is present on residues Ser-41 and Ser-42. Residues 56 to 156 enclose the Glutaredoxin domain; it reads RRHLVGLIER…KLLQEDLAYD (101 aa). 158 to 187 contributes to the FAD binding site; that stretch reads DLIIIGGGSGGLSCAKEAAILGKKVMVLDF. Residues Cys-203 and Cys-208 are joined by a disulfide bond. The residue at position 379 (Lys-379) is an N6-succinyllysine. Residue His-616 is the Proton acceptor of the active site. The cysteinyl-selenocysteine (Cys-Sec) cross-link spans 641–642; sequence CU. A non-standard amino acid (selenocysteine) is located at residue Sec-642.

This sequence belongs to the class-I pyridine nucleotide-disulfide oxidoreductase family. Homodimer. It depends on FAD as a cofactor.

The protein resides in the cytoplasm. The protein localises to the nucleus. It localises to the microsome. It is found in the endoplasmic reticulum. The enzyme catalyses [thioredoxin]-dithiol + NADP(+) = [thioredoxin]-disulfide + NADPH + H(+). In terms of biological role, displays thioredoxin reductase, glutaredoxin and glutathione reductase activities. Catalyzes disulfide bond isomerization. Promotes disulfide bond formation between GPX4 and various sperm proteins and may play a role in sperm maturation by promoting formation of sperm structural components. The polypeptide is Thioredoxin reductase 3 (Homo sapiens (Human)).